The following is a 623-amino-acid chain: Vacuolar-sorting receptor 1 (623 aa).

A signal peptide spans 1–22 (MKCWRLSAILFLGFMLTSLSTA). Topologically, residues 23–564 (RFVVEKNSLS…SKTASQAKST (542 aa)) are lumenal. The PA domain maps to 54-163 (QYGGSMAGNV…SFGEKLKDAI (110 aa)). N-linked (GlcNAc...) asparagine glycosylation is present at N143. EGF-like domains lie at 411–461 (ETNE…TTCE) and 464–511 (GHGR…KNCE). 6 disulfides stabilise this stretch: C415–C433, C422–C442, C444–C460, C468–C488, C475–C496, and C498–C510. The region spanning 512-554 (DIDECKDKKACQCPECSCKNTWGSYNCSCSGDLLYIKDQDTCI) is the EGF-like 3; calcium-binding domain. N537 is a glycosylation site (N-linked (GlcNAc...) asparagine). A disulfide bridge connects residues C540 and C553. A helical transmembrane segment spans residues 565–585 (WAAFWVVLIALAMIAGGGFLV). Residues 586–623 (YKYRIRQYMDSEIRAIMAQYMPLDSQEEGPNHVNHQRG) are Cytoplasmic-facing. The short motif at 605 to 608 (YMPL) is the Tyrosine-based internalization motif element.

The protein belongs to the VSR (BP-80) family. As to quaternary structure, interacts with the N-terminal propeptide of aleurein (proaleurein).

It is found in the membrane. The protein localises to the golgi apparatus membrane. Its subcellular location is the cytoplasmic vesicle. The protein resides in the clathrin-coated vesicle membrane. It localises to the prevacuolar compartment membrane. Functionally, vacuolar-sorting receptor (VSR) involved in clathrin-coated vesicles sorting from Golgi apparatus to vacuoles. Seems to binds preferentially proteins containing a N-terminal NPIR motif. This is Vacuolar-sorting receptor 1 (BP80) from Pisum sativum (Garden pea).